Here is a 230-residue protein sequence, read N- to C-terminus: Orotidine 5'-phosphate decarboxylase (230 aa).

Residues aspartate 10, lysine 32, 59–68 (DLKYHDIPNT), threonine 119, arginine 180, glutamine 189, glycine 209, and arginine 210 each bind substrate. Lysine 61 functions as the Proton donor in the catalytic mechanism.

This sequence belongs to the OMP decarboxylase family. Type 1 subfamily. Homodimer.

The catalysed reaction is orotidine 5'-phosphate + H(+) = UMP + CO2. The protein operates within pyrimidine metabolism; UMP biosynthesis via de novo pathway; UMP from orotate: step 2/2. In terms of biological role, catalyzes the decarboxylation of orotidine 5'-monophosphate (OMP) to uridine 5'-monophosphate (UMP). The polypeptide is Orotidine 5'-phosphate decarboxylase (Haemophilus influenzae (strain 86-028NP)).